The sequence spans 220 residues: Putative cobalt transport protein CbiM (220 aa).

A run of 5 helical transmembrane segments spans residues 6–26 (GFLP…IVVY), 43–63 (ALVA…FPSV), 74–94 (GLLV…IVLL), 98–118 (LLLA…MGII), and 182–202 (IFTL…AAVI).

This sequence belongs to the CbiM family. As to quaternary structure, forms an energy-coupling factor (ECF) transporter complex composed of an ATP-binding protein (A component, CbiO), a transmembrane protein (T component, CbiQ) and 2 possible substrate-capture proteins (S components, CbiM and CbiN) of unknown stoichimetry.

The protein localises to the cell membrane. Its pathway is cofactor biosynthesis; adenosylcobalamin biosynthesis. Functionally, part of the energy-coupling factor (ECF) transporter complex CbiMNOQ involved in cobalt import. This is Putative cobalt transport protein CbiM from Haloquadratum walsbyi (strain DSM 16790 / HBSQ001).